We begin with the raw amino-acid sequence, 726 residues long: Uracil catabolism protein 2 (726 aa).

Residues 24 to 53 constitute a DNA-binding region (zn(2)-C6 fungal-type); it reads CGVCRKFKTRCDFEPLVGKCHRCNVLRLEC. Disordered regions lie at residues 152–183 and 629–681; these read AGMGDRNATYDDDDDGDDDGHDHSDSDNFVNG and SGRL…SGAD. Positions 161-170 are enriched in acidic residues; that stretch reads YDDDDDGDDD. Positions 640–679 are enriched in polar residues; it reads RGSPSMTPGFQQSVQSSSALQGSKAGSPQSARSVNSQGSG.

Belongs to the URC2 family.

It localises to the nucleus. Functionally, probable transcriptional activator involved in uracil catabolism. This chain is Uracil catabolism protein 2 (URC2), found in Lachancea kluyveri (Yeast).